The sequence spans 249 residues: Aquaporin (249 aa).

Over 1-11 (MTRKWIKKLQS) the chain is Cytoplasmic. A helical transmembrane segment spans residues 12-32 (YIGEFFASFIFGFAVYTSIIG). Residues 33–39 (SAQTGQS) are Extracellular-facing. The helical transmembrane segment at 40 to 60 (AGPIIVALTIALSGVAIIYSF) threads the bilayer. At 61–83 (CDITVAHFNPAITFSAMCFRRLP) the chain is on the cytoplasmic side. An NPA motif is present at residues 69–71 (NPA). Residues 84–104 (FFGGIFIIIFQVAGFIIAGLA) traverse the membrane as a helical segment. The Extracellular segment spans residues 105-133 (SVAVLPGKYKNKLEIARPKRVADNVSRGR). Residues 134–154 (IFGTEFFLTAILVYVAFAVGV) form a helical membrane-spanning segment. The Cytoplasmic portion of the chain corresponds to 155 to 179 (NPYTPPKDEHGDQLDPDEGLTEGRK). The chain crosses the membrane as a helical span at residues 180–200 (ITAPLAIGFTLGFCALLGIAS). At 201–223 (SGGAFNPGIVLSPMILTGTWDFW) the chain is on the extracellular side. Residues 206–208 (NPG) carry the NPG motif. A helical transmembrane segment spans residues 224 to 246 (WVYLLGQFSGGLLGGGLQRFLLY). Topologically, residues 247-249 (KIF) are cytoplasmic.

Belongs to the MIP/aquaporin (TC 1.A.8) family.

Its subcellular location is the cell membrane. In terms of biological role, water channel required to facilitate the transport of water across membranes. Involved in osmotolerance. The sequence is that of Aquaporin (AQP) from Vairimorpha ceranae (strain BRL01) (Microsporidian parasite).